The following is a 607-amino-acid chain: Elongation factor 4 (607 aa).

One can recognise a tr-type G domain in the interval 11 to 193 (GKIRNFSIIA…QIVEKVPAPT (183 aa)). GTP contacts are provided by residues 23–28 (DHGKST) and 140–143 (NKID).

It belongs to the TRAFAC class translation factor GTPase superfamily. Classic translation factor GTPase family. LepA subfamily.

Its subcellular location is the cell membrane. The catalysed reaction is GTP + H2O = GDP + phosphate + H(+). Its function is as follows. Required for accurate and efficient protein synthesis under certain stress conditions. May act as a fidelity factor of the translation reaction, by catalyzing a one-codon backward translocation of tRNAs on improperly translocated ribosomes. Back-translocation proceeds from a post-translocation (POST) complex to a pre-translocation (PRE) complex, thus giving elongation factor G a second chance to translocate the tRNAs correctly. Binds to ribosomes in a GTP-dependent manner. The chain is Elongation factor 4 from Streptococcus pneumoniae (strain Taiwan19F-14).